The primary structure comprises 423 residues: Zinc transporter ZIP13 (423 aa).

The Lumenal portion of the chain corresponds to Met-1–Arg-15. The chain crosses the membrane as a helical span at residues Leu-16–Ala-36. Residues Leu-37–Trp-68 are Cytoplasmic-facing. The helical transmembrane segment at Ile-69 to Ile-89 threads the bilayer. At Pro-90–Gln-108 the chain is on the lumenal side. A helical membrane pass occupies residues Leu-109 to Ala-129. Residues Trp-130–Gln-149 lie on the Cytoplasmic side of the membrane. The chain crosses the membrane as a helical span at residues Gln-150 to Phe-170. Residues Asp-171–Ala-235 lie on the Lumenal side of the membrane. The chain crosses the membrane as a helical span at residues Val-236 to Leu-256. The short motif at His-257 to Glu-262 is the XEXPHE-motif element. Over His-257–Ser-278 the chain is Cytoplasmic. A helical membrane pass occupies residues Ala-279 to Cys-299. Residues Ala-300–Thr-368 lie on the Lumenal side of the membrane. A helical transmembrane segment spans residues Val-369–Leu-389. At Pro-390 to Ser-401 the chain is on the cytoplasmic side. A helical transmembrane segment spans residues Leu-402–Val-422. A topological domain (lumenal) is located at residue Glu-423.

Belongs to the ZIP transporter (TC 2.A.5) family. Homodimer.

It localises to the golgi apparatus membrane. It is found in the cytoplasmic vesicle membrane. Its subcellular location is the endoplasmic reticulum membrane. It carries out the reaction Zn(2+)(in) = Zn(2+)(out). In terms of biological role, functions as a zinc transporter transporting Zn(2+) from the Golgi apparatus to the cytosol and thus influences the zinc level at least in areas of the cytosol. May regulate beige adipocyte differentiation. The sequence is that of Zinc transporter ZIP13 from Bos taurus (Bovine).